The primary structure comprises 512 residues: Alpha-amylase 1 (512 aa).

An N-terminal signal peptide occupies residues 1–25 (MRFSTEGFTSKVVAAILAFSRLVSA). Cys-66 and Cys-74 are disulfide-bonded. Trp-119 provides a ligand contact to substrate. Ca(2+) is bound at residue Asn-157. His-158 serves as a coordination point for substrate. Cysteines 186 and 200 form a disulfide. Glu-198 and Asp-211 together coordinate Ca(2+). Asn-233 is a glycosylation site (N-linked (GlcNAc...) asparagine). Arg-240 provides a ligand contact to substrate. Residues Asp-242, His-246, and Glu-266 each coordinate Ca(2+). Catalysis depends on Asp-242, which acts as the Nucleophile. 245-246 (KH) lines the substrate pocket. The active-site Proton donor is Glu-266. Residue Gly-270 coordinates substrate. Cysteines 276 and 319 form a disulfide. Asp-333 and Arg-380 together coordinate substrate. A disulfide bridge connects residues Cys-475 and Cys-510.

The protein belongs to the glycosyl hydrolase 13 family. It depends on Ca(2+) as a cofactor.

It is found in the secreted. It carries out the reaction Endohydrolysis of (1-&gt;4)-alpha-D-glucosidic linkages in polysaccharides containing three or more (1-&gt;4)-alpha-linked D-glucose units.. With respect to regulation, alpha-amylase expression underlies catabolite repression by glucose. The chain is Alpha-amylase 1 (AMY1) from Schwanniomyces occidentalis (Yeast).